Here is a 447-residue protein sequence, read N- to C-terminus: Alpha-1,6-mannosyl-glycoprotein 2-beta-N-acetylglucosaminyltransferase (447 aa).

Over 1–9 (MRFRIYKRK) the chain is Cytoplasmic. A helical; Signal-anchor for type II membrane protein transmembrane segment spans residues 10-29 (VLILTLVVAACGFVLWSSNG). Residues 30–447 (RQRKNEALAP…ELCKSYRRLQ (418 aa)) lie on the Lumenal side of the membrane. 2 N-linked (GlcNAc...) asparagine glycosylation sites follow: asparagine 69 and asparagine 86. Residues 123-127 (QVHNR) and aspartate 154 each bind substrate. An intrachain disulfide couples cysteine 196 to cysteine 210. 229 to 233 (QTKHH) is a substrate binding site. A Mn(2+)-binding site is contributed by aspartate 261. The cysteines at positions 283 and 286 are disulfide-linked. Residue arginine 298 participates in substrate binding. Intrachain disulfides connect cysteine 334/cysteine 357, cysteine 339/cysteine 440, and cysteine 378/cysteine 386. A Mn(2+)-binding site is contributed by histidine 374.

This sequence belongs to the glycosyltransferase 16 (GT16) protein family. Homodimer. Requires Mn(2+) as cofactor.

The protein resides in the golgi apparatus membrane. It carries out the reaction an N(4)-{beta-D-GlcNAc-(1-&gt;2)-alpha-D-Man-(1-&gt;3)-[alpha-D-Man-(1-&gt;6)]-beta-D-Man-(1-&gt;4)-beta-D-GlcNAc-(1-&gt;4)-beta-D-GlcNAc}-L-asparaginyl-[protein] + UDP-N-acetyl-alpha-D-glucosamine = N(4)-{beta-D-GlcNAc-(1-&gt;2)-alpha-D-Man-(1-&gt;3)-[beta-D-GlcNAc-(1-&gt;2)-alpha-D-Man-(1-&gt;6)]-beta-D-Man-(1-&gt;4)-beta-D-GlcNAc-(1-&gt;4)-beta-D-GlcNAc}-L-asparaginyl-[protein] + UDP + H(+). Its pathway is protein modification; protein glycosylation. In terms of biological role, plays an essential role in protein N-glycosylation. Catalyzes the transfer of N-acetylglucosamine (GlcNAc) onto the free terminal mannose moiety in the core structure of the nascent N-linked glycan chain, giving rise to the second branch in complex glycans. The protein is Alpha-1,6-mannosyl-glycoprotein 2-beta-N-acetylglucosaminyltransferase (MGAT2) of Homo sapiens (Human).